Reading from the N-terminus, the 202-residue chain is Ribosomal RNA small subunit methyltransferase G (202 aa).

S-adenosyl-L-methionine is bound by residues G75, F80, 125–126, and R139; that span reads VQ.

Belongs to the methyltransferase superfamily. RNA methyltransferase RsmG family.

The protein localises to the cytoplasm. Specifically methylates the N7 position of a guanine in 16S rRNA. In Mesomycoplasma hyopneumoniae (strain 232) (Mycoplasma hyopneumoniae), this protein is Ribosomal RNA small subunit methyltransferase G.